A 136-amino-acid polypeptide reads, in one-letter code: uncharacterized protein (136 aa).

Residues phenylalanine 102 to valine 118 traverse the membrane as a helical segment.

It localises to the membrane. This is an uncharacterized protein from Saccharomyces cerevisiae (strain ATCC 204508 / S288c) (Baker's yeast).